A 325-amino-acid chain; its full sequence is GMP reductase (325 aa).

Residue Cys-174 is the Thioimidate intermediate of the active site. Residue 203-226 coordinates NADP(+); sequence MIADGGIRTHGDIAKSIRFGASMV.

Belongs to the IMPDH/GMPR family. GuaC type 2 subfamily.

It catalyses the reaction IMP + NH4(+) + NADP(+) = GMP + NADPH + 2 H(+). Its function is as follows. Catalyzes the irreversible NADPH-dependent deamination of GMP to IMP. It functions in the conversion of nucleobase, nucleoside and nucleotide derivatives of G to A nucleotides, and in maintaining the intracellular balance of A and G nucleotides. This Staphylococcus carnosus (strain TM300) protein is GMP reductase.